Consider the following 541-residue polypeptide: MSFSATILFSPPSGSEARCCCCACKSETSQGSTGSQGGNPPASTPITVTGHGLAVQSSEQLLHIIYQRVDKAVGLAEAALGLARANNELLKQLQEEVGELRQGKVCTADEDRESRARTPPPEEPGVLKGSPGEASNSLPAMEEECDSVGSGVQVVIEELRQLGAASTVGQGPLGFFAAPQRDARLPGCTLAAVEGAPLLNPMADDYVASEGSIQRVLVPAYAKQLSPATQLAIQRASSETGPESGTKLPATRPEGVLGSAALDSALDESGAGGAGELSRSLGFVGSPCRIRGTGQKNSRRKRDLVLSKLVHNVHNHITNDKRFNGSESIKSSWNISVVKFLLEKLKQELMVSPHNYTDKELKGACVAYFLTKRREYRNSLNPFKGLKEKEEKKLRSRRYRLFANRSSIMRHFGPEDQHLWKDVTEELMSDEEDSLNEPGVWVARSPRFRAQRLTELCYHLDANSKHGTKANRVYGPPSDRLPSVEAQLLPPELYNPNFQEDEGGGNEKGPVSPSYDQPHKTSCPDLNSFIEIKVEKDEYTL.

A signal peptide spans 1-17 (MSFSATILFSPPSGSEA). Disordered stretches follow at residues 28–47 (TSQG…TPIT) and 103–138 (GKVC…SNSL). A compositionally biased stretch (basic and acidic residues) spans 103–116 (GKVCTADEDRESRA). Thr-118 carries the phosphothreonine modification. Residues Lys-128 and Lys-223 each participate in a glycyl lysine isopeptide (Lys-Gly) (interchain with G-Cter in SUMO2) cross-link. Ser-226 carries the phosphoserine modification. Polar residues predominate over residues 232 to 243 (AIQRASSETGPE). The interval 232-254 (AIQRASSETGPESGTKLPATRPE) is disordered. Ser-286 and Ser-429 each carry phosphoserine. The tract at residues 494–526 (YNPNFQEDEGGGNEKGPVSPSYDQPHKTSCPDL) is disordered.

The protein resides in the secreted. This is an uncharacterized protein from Mus musculus (Mouse).